A 634-amino-acid chain; its full sequence is Chaperone protein HtpG (634 aa).

The a; substrate-binding stretch occupies residues 1–342 (MTVDTDKQTL…SADLSLNVSR (342 aa)). The b stretch occupies residues 343–559 (EILQSGPVVD…QGDLGLQMRQ (217 aa)). The c stretch occupies residues 560-634 (LLEASGQAVP…LNKLLLELSA (75 aa)).

Belongs to the heat shock protein 90 family. In terms of assembly, homodimer.

It localises to the cytoplasm. Its function is as follows. Molecular chaperone. Has ATPase activity. In Xanthomonas campestris pv. campestris (strain 8004), this protein is Chaperone protein HtpG.